Reading from the N-terminus, the 362-residue chain is Chorismate synthase (362 aa).

Arginine 48 and arginine 54 together coordinate NADP(+). FMN is bound by residues arginine 125–serine 127, asparagine 238–alanine 239, glycine 278, lysine 293–serine 297, and arginine 319.

Belongs to the chorismate synthase family. In terms of assembly, homotetramer. The cofactor is FMNH2.

It catalyses the reaction 5-O-(1-carboxyvinyl)-3-phosphoshikimate = chorismate + phosphate. The protein operates within metabolic intermediate biosynthesis; chorismate biosynthesis; chorismate from D-erythrose 4-phosphate and phosphoenolpyruvate: step 7/7. Catalyzes the anti-1,4-elimination of the C-3 phosphate and the C-6 proR hydrogen from 5-enolpyruvylshikimate-3-phosphate (EPSP) to yield chorismate, which is the branch point compound that serves as the starting substrate for the three terminal pathways of aromatic amino acid biosynthesis. This reaction introduces a second double bond into the aromatic ring system. This chain is Chorismate synthase, found in Psychromonas ingrahamii (strain DSM 17664 / CCUG 51855 / 37).